Here is a 182-residue protein sequence, read N- to C-terminus: Adenylate kinase (182 aa).

An ATP-binding site is contributed by 12-17 (GAGKGT). The interval 32–61 (STGDLLRAEVGAKTPLGQEAAAVMNRGELV) is NMP. Residues Thr-33, Arg-38, 59 to 61 (ELV), 85 to 88 (GFPR), and Gln-92 contribute to the AMP site. An LID region spans residues 126–132 (SRGRSDD). Arg-127 provides a ligand contact to ATP. 2 residues coordinate AMP: Arg-129 and Arg-140. Residue Gly-168 participates in ATP binding.

It belongs to the adenylate kinase family. In terms of assembly, monomer.

The protein localises to the cytoplasm. The enzyme catalyses AMP + ATP = 2 ADP. It functions in the pathway purine metabolism; AMP biosynthesis via salvage pathway; AMP from ADP: step 1/1. In terms of biological role, catalyzes the reversible transfer of the terminal phosphate group between ATP and AMP. Plays an important role in cellular energy homeostasis and in adenine nucleotide metabolism. The polypeptide is Adenylate kinase (Prochlorococcus marinus (strain MIT 9303)).